The chain runs to 91 residues: Large ribosomal subunit protein bL27 (91 aa).

Residues 1-22 (MAHKKAGGSSRNGRDSAGRRLG) are disordered.

It belongs to the bacterial ribosomal protein bL27 family.

The sequence is that of Large ribosomal subunit protein bL27 from Methylocella silvestris (strain DSM 15510 / CIP 108128 / LMG 27833 / NCIMB 13906 / BL2).